Consider the following 447-residue polypeptide: Chaperone protein dnaJ A7B, chloroplastic (447 aa).

Residues 1–86 (MALLQFGGTL…HRRSSRFIVR (86 aa)) constitute a chloroplast transit peptide. A J domain is found at 90-154 (DFYSTLGVSR…EKRSIYDKYG (65 aa)). The CR-type zinc finger occupies 217–298 (GVEKEIEITR…CGGDGRVRKT (82 aa)). Positions 230, 233, 247, 250, 273, 276, 286, and 289 each coordinate Zn(2+). CXXCXGXG motif repeat units follow at residues 230 to 237 (CNTCDGTG), 247 to 254 (CKTCGGQG), 273 to 280 (CNTCGGTG), and 286 to 293 (CNTCGGDG).

This sequence belongs to the DnaJ family. Interacts with PCNA. Expressed in roots, stems, leaves and panicles.

Its subcellular location is the plastid. The protein localises to the chloroplast. Functionally, plays pivotal roles in chloroplast development. Is essential for the regulation of chloroplast development and differentiation. This chain is Chaperone protein dnaJ A7B, chloroplastic, found in Oryza sativa subsp. japonica (Rice).